Consider the following 305-residue polypeptide: Leucine-rich repeat-containing protein 25 (305 aa).

The first 20 residues, 1–20, serve as a signal peptide directing secretion; that stretch reads MGGTLAWTLLLPLLLRESDS. Over 21–165 the chain is Extracellular; sequence LEPSCTVSSA…SCAPGLASAT (145 aa). 3 LRR repeats span residues 39–59, 62–83, and 86–107; these read SATC…QSLR, NVIL…FFAH, and KLEV…LAAR. Residues Asn-44 and Asn-55 are each glycosylated (N-linked (GlcNAc...) asparagine). N-linked (GlcNAc...) asparagine glycans are attached at residues Asn-130 and Asn-148. Residues 166-186 traverse the membrane as a helical segment; sequence IGAVVVSGCLLLGLAIAGPVL. The Cytoplasmic portion of the chain corresponds to 187-305; the sequence is AWRLWRCRVA…DEEEYVIPGH (119 aa). The disordered stretch occupies residues 204–229; the sequence is PWAAQDGPKPGLGLQPRYGSRSAPKP. Residue Tyr-284 is modified to Phosphotyrosine.

In terms of assembly, interacts with RIGI. Interacts with SQSTM1. Interacts with p65/RELA; this interaction promotes the degradation of RELA through autophagy. As to expression, expressed in plasmacytoid dendritic cells (PDC), monocyte-derived dendritic cells (MDDC), granulocytes, monocytes, B-lymphocytes, peripheral blood leukocytes, spleen, bone marrow, and, to a lesser extent, lymph nodes, fetal liver, and appendix but not in thymus.

It is found in the membrane. The protein resides in the cytoplasm. Plays a role in the inhibition of RLR-mediated type I interferon signaling pathway by targeting RIGI for autophagic degradation. Interacts specifically with ISG15-associated RIGI to promote interaction between RIGI and the autophagic cargo receptor p62/SQSTM1 to mediate RIGI degradation via selective autophagy. Also plays a role in the inhibition of NF-kappa-B signaling pathway and inflammatory response by promoting the degradation of p65/RELA. The protein is Leucine-rich repeat-containing protein 25 (LRRC25) of Homo sapiens (Human).